We begin with the raw amino-acid sequence, 586 residues long: ATPase family AAA domain-containing protein 3A (586 aa).

Disordered stretches follow at residues 1–55 (MSWL…PTGL) and 111–134 (QAEERRKTLSEETRQHQARAQYQD). The residue at position 2 (Ser-2) is an N-acetylserine. The tract at residues 2-50 (SWLFGINKGPKGEGAGPPPPLPPAQPGAEGGGDRGLGDRPAPKDKWSNF) is required for interaction with the inner surface of the mitochondrial outer membrane. Residues 2 to 246 (SWLFGINKGP…FRAFVTDWDK (245 aa)) lie on the Mitochondrial intermembrane side of the membrane. The segment covering 17 to 26 (GPPPPLPPAQ) has biased composition (pro residues). 2 stretches are compositionally biased toward basic and acidic residues: residues 32–48 (GGDRGLGDRPAPKDKWS) and 111–125 (QAEERRKTLSEETRQ). A coiled-coil region spans residues 86-219 (QLEQQSKLKE…QIRLKAAEHR (134 aa)). A helical transmembrane segment spans residues 247–264 (VTATVAGLTLLAVGVYSA). The Mitochondrial matrix portion of the chain corresponds to 265-586 (KNATLVAGRF…PGRGDEPSPS (322 aa)). The interval 290–305 (RITVLEALRHPIQVSR) is S100B-binding. Phosphoserine is present on Ser-321. An ATP-binding site is contributed by 352 to 359 (GPPGTGKT). Lys-491 carries the N6-acetyllysine modification.

It belongs to the AAA ATPase family. As to quaternary structure, can form homooligomers. Homodimer formation at the N-terminus may be regulated by ATP and is required for the interaction with the inner surface of the mitochondrial outer membrane and correct mitochondrial homeostasis. Interacts with components of the mitochondrial ribosome and with other proteins involved in mitochondrial RNA metabolism. May also interact with protein involved in lipid metabolism, including STARD9. May interact with FAM210A. Interacts with GADD45GIP1. Interacts with S100B in a Ca(+2)- and Zn(+2)-dependent manner; this interaction probably occurs in the cytosol prior to mitochondrial targeting. S100B could assist ATAD3A cytoplasmic processing, preventing aggregation and favoring mitochondrial localization. Interacts with HSP60/HSPD1. Forms heterooligomers with ATAD3B; this interaction may affect ATAD3A activity. Interacts with CLPB. Interacts with EIF2AK3/PERK; ATAD3A and EIF2S1/eIF-2-alpha occupy a common binding site within the cytoplasmic loop of EIF2AK3/PERK, leading to prevent EIF2AK3/PERK association with its substrate EIF2S1/eIF-2-alpha. Overexpressed in lung adenocarcinomas (at protein level).

It is found in the mitochondrion inner membrane. The protein localises to the mitochondrion matrix. Its subcellular location is the mitochondrion nucleoid. It catalyses the reaction ATP + H2O = ADP + phosphate + H(+). Functionally, essential for mitochondrial network organization, mitochondrial metabolism and cell growth at organism and cellular level. May play an important role in mitochondrial protein synthesis. May also participate in mitochondrial DNA replication. May bind to mitochondrial DNA D-loops and contribute to nucleoid stability. Required for enhanced channeling of cholesterol for hormone-dependent steroidogenesis. Involved in mitochondrial-mediated antiviral innate immunity. Required to protect mitochondria from the PERK-mediated unfolded protein response: specifically inhibits the activity of EIF2AK3/PERK at mitochondria-endoplasmic reticulum contact sites, thereby providing a safe haven for mitochondrial protein translation during endoplasmic reticulum stress. Ability to inhibit EIF2AK3/PERK is independent of its ATPase activity. Also involved in the mitochondrial DNA damage response by promoting signaling between damaged genomes and the mitochondrial membrane, leading to activation of the integrated stress response (ISR). This is ATPase family AAA domain-containing protein 3A from Homo sapiens (Human).